The following is a 375-amino-acid chain: CCA-adding enzyme (375 aa).

2 residues coordinate ATP: Gly-8 and Arg-11. 2 residues coordinate CTP: Gly-8 and Arg-11. Residues Asp-21 and Asp-23 each coordinate Mg(2+). Positions 91, 137, and 140 each coordinate ATP. CTP contacts are provided by Arg-91, Arg-137, and Arg-140.

It belongs to the tRNA nucleotidyltransferase/poly(A) polymerase family. Bacterial CCA-adding enzyme type 2 subfamily. The cofactor is Mg(2+).

The enzyme catalyses a tRNA precursor + 2 CTP + ATP = a tRNA with a 3' CCA end + 3 diphosphate. It carries out the reaction a tRNA with a 3' CCA end + 2 CTP + ATP = a tRNA with a 3' CCACCA end + 3 diphosphate. In terms of biological role, catalyzes the addition and repair of the essential 3'-terminal CCA sequence in tRNAs without using a nucleic acid template. Adds these three nucleotides in the order of C, C, and A to the tRNA nucleotide-73, using CTP and ATP as substrates and producing inorganic pyrophosphate. tRNA 3'-terminal CCA addition is required both for tRNA processing and repair. Also involved in tRNA surveillance by mediating tandem CCA addition to generate a CCACCA at the 3' terminus of unstable tRNAs. While stable tRNAs receive only 3'-terminal CCA, unstable tRNAs are marked with CCACCA and rapidly degraded. The sequence is that of CCA-adding enzyme from Pseudomonas entomophila (strain L48).